The following is a 113-amino-acid chain: Large ribosomal subunit protein uL18 (113 aa).

This sequence belongs to the universal ribosomal protein uL18 family. In terms of assembly, part of the 50S ribosomal subunit; part of the 5S rRNA/L5/L18/L25 subcomplex. Contacts the 5S and 23S rRNAs.

Functionally, this is one of the proteins that bind and probably mediate the attachment of the 5S RNA into the large ribosomal subunit, where it forms part of the central protuberance. The polypeptide is Large ribosomal subunit protein uL18 (Phocaeicola vulgatus (strain ATCC 8482 / DSM 1447 / JCM 5826 / CCUG 4940 / NBRC 14291 / NCTC 11154) (Bacteroides vulgatus)).